Consider the following 832-residue polypeptide: Prickle-like protein 1-B (832 aa).

The PET domain occupies 14–122; sequence FGCQRSSTSD…NIKMLSRAVM (109 aa). LIM zinc-binding domains are found at residues 124 to 188, 189 to 249, and 250 to 313; these read AMCE…ELLK, PRCS…HYAE, and YCES…EDVH. 4 disordered regions span residues 312–346, 428–455, 602–701, and 766–832; these read VHASDSSDSAFQSARSRESRRSVRMGKSSRSADQC, QQPSEDNRSTEHWMSENIKGKNDLQRNN, ICQE…KERN, and CSSS…CIIS. 2 stretches are compositionally biased toward basic and acidic residues: residues 432-453 and 603-614; these read EDNRSTEHWMSENIKGKNDLQR and CQEKPPPEEKPM. 2 stretches are compositionally biased toward basic residues: residues 669 to 680 and 816 to 832; these read RPHHHRRRKSRK and TKSKKKKGHKGKNCIIS. Cys-829 is modified (cysteine methyl ester). Cys-829 is lipidated: S-farnesyl cysteine. Residues 830–832 constitute a propeptide, removed in mature form; that stretch reads IIS.

It belongs to the prickle / espinas / testin family. Interacts with dvl2/dsh and mapk8/jnk1. As to expression, expressed in the dorsal marginal zone of early gastrulae (stage 10). As gastrulation proceeds, expression expands to include the lateral and ventral marginal zones, excluding the few rows of cells above the blastopore lip. Expression moves dorsally with gastrulation cell movements, and by the end of gastrulation expression is seen in dorsal mesoderm and posterior but not anterior neural ectoderm. Expression becomes down-regulated in mesoderm but remains strong in posterior ectoderm through the neurula stages. During tailbud stages, expressed in the pronephric duct, tailbud, tailtip and forming somites. In the most posterior regions, expressed in notochord and in the floorplate of the neural tube with weak expression in the roofplate. At stage 30, expressed in a complex pattern in the head including strong expression in the lens and otic vesicle.

It is found in the cell membrane. Acts in a planar cell polarity (PCP) complex; polarization along the apical/basal axis of epithelial cells. Regulates the polarized assembly of fibronectrin on the surface of the mesoderm during gastrulation. Essential for gastrulation cell movements, cooperating with dvl2/dsh to activate jnk. Acts together with tes to control axial elongation. The chain is Prickle-like protein 1-B (prickle1-b) from Xenopus laevis (African clawed frog).